The primary structure comprises 142 residues: Large ribosomal subunit protein uL11 (142 aa).

It belongs to the universal ribosomal protein uL11 family. As to quaternary structure, part of the ribosomal stalk of the 50S ribosomal subunit. Interacts with L10 and the large rRNA to form the base of the stalk. L10 forms an elongated spine to which L12 dimers bind in a sequential fashion forming a multimeric L10(L12)X complex. Post-translationally, one or more lysine residues are methylated.

In terms of biological role, forms part of the ribosomal stalk which helps the ribosome interact with GTP-bound translation factors. This is Large ribosomal subunit protein uL11 from Solibacter usitatus (strain Ellin6076).